Here is a 65-residue protein sequence, read N- to C-terminus: White colony protein WHS11 (65 aa).

Positions methionine 1–leucine 17 are enriched in basic and acidic residues. The tract at residues methionine 1–lysine 32 is disordered. Residues threonine 18 to glutamate 27 are compositionally biased toward polar residues.

To yeast HSP12/GLP1 and S.pombe hsp9.

This chain is White colony protein WHS11 (WHS11), found in Candida albicans (strain WO-1) (Yeast).